We begin with the raw amino-acid sequence, 419 residues long: Dimethylamine methyltransferase MtbB2 (419 aa).

Pyl308 is a non-standard amino acid (pyrrolysine).

It belongs to the dimethylamine methyltransferase family.

It catalyses the reaction Co(I)-[dimethylamine-specific corrinoid protein] + dimethylamine + H(+) = methyl-Co(III)-[dimethylamine-specific corrinoid protein] + methylamine. The protein operates within one-carbon metabolism; methanogenesis from dimethylamine. Catalyzes the transfer of a methyl group from dimethylamine to the corrinoid cofactor of MtbC. No evidence for expression of this protein has been found after growth under presumably inducing conditions. The sequence is that of Dimethylamine methyltransferase MtbB2 from Methanosarcina barkeri.